The chain runs to 151 residues: Deoxyuridine 5'-triphosphate nucleotidohydrolase (151 aa).

Residues 70-72 (RSG), N83, 87-89 (LID), and M97 contribute to the substrate site.

Belongs to the dUTPase family. Mg(2+) serves as cofactor.

It carries out the reaction dUTP + H2O = dUMP + diphosphate + H(+). It functions in the pathway pyrimidine metabolism; dUMP biosynthesis; dUMP from dCTP (dUTP route): step 2/2. Functionally, this enzyme is involved in nucleotide metabolism: it produces dUMP, the immediate precursor of thymidine nucleotides and it decreases the intracellular concentration of dUTP so that uracil cannot be incorporated into DNA. The protein is Deoxyuridine 5'-triphosphate nucleotidohydrolase of Stutzerimonas stutzeri (strain A1501) (Pseudomonas stutzeri).